A 329-amino-acid chain; its full sequence is L-carnitine dehydrogenase (329 aa).

19–24 provides a ligand contact to NAD(+); sequence GAGVIG.

It belongs to the 3-hydroxyacyl-CoA dehydrogenase family. L-carnitine dehydrogenase subfamily. Homodimer.

Its subcellular location is the cytoplasm. The catalysed reaction is carnitine + NAD(+) = 3-dehydrocarnitine + NADH + H(+). It functions in the pathway amine and polyamine metabolism; carnitine metabolism. Functionally, catalyzes the NAD(+)-dependent oxidation of L-carnitine to 3-dehydrocarnitine. This chain is L-carnitine dehydrogenase, found in Nocardiopsis dassonvillei (strain ATCC 23218 / DSM 43111 / CIP 107115 / JCM 7437 / KCTC 9190 / NBRC 14626 / NCTC 10488 / NRRL B-5397 / IMRU 509) (Actinomadura dassonvillei).